A 244-amino-acid chain; its full sequence is Probable phosphatase NT01CX_1282 (244 aa).

Zn(2+)-binding residues include H8, H10, H16, H41, E74, H102, H132, D193, and H195.

Belongs to the PHP family. The cofactor is Zn(2+).

The protein is Probable phosphatase NT01CX_1282 of Clostridium novyi (strain NT).